The chain runs to 145 residues: MLDIQQIQAIIPHRYPFLLVDRILEIEEGKRAVGIKNVSANESFFVGHFPEYPVMPGVLIVEALAQVGAVAMLKKEENRGRLAFFTGIDNCRFKKQVKPGDQLRLEVEIIRAKGPIGKGKGVATVDGELVCETEIMFALGDKKND.

The active site involves His-48.

This sequence belongs to the thioester dehydratase family. FabZ subfamily.

It is found in the cytoplasm. The enzyme catalyses a (3R)-hydroxyacyl-[ACP] = a (2E)-enoyl-[ACP] + H2O. Its function is as follows. Involved in unsaturated fatty acids biosynthesis. Catalyzes the dehydration of short chain beta-hydroxyacyl-ACPs and long chain saturated and unsaturated beta-hydroxyacyl-ACPs. This chain is 3-hydroxyacyl-[acyl-carrier-protein] dehydratase FabZ, found in Geobacillus sp. (strain WCH70).